Reading from the N-terminus, the 264-residue chain is Thymidylate synthase (264 aa).

Arg-21 contacts dUMP. Position 51 (His-51) interacts with (6R)-5,10-methylene-5,6,7,8-tetrahydrofolate. 126–127 (RR) provides a ligand contact to dUMP. Cys-146 functions as the Nucleophile in the catalytic mechanism. Residues 166-169 (RSCD), Asn-177, and 207-209 (HLY) each bind dUMP. Asp-169 contributes to the (6R)-5,10-methylene-5,6,7,8-tetrahydrofolate binding site. A (6R)-5,10-methylene-5,6,7,8-tetrahydrofolate-binding site is contributed by Ser-263.

Belongs to the thymidylate synthase family. Bacterial-type ThyA subfamily. Homodimer.

The protein resides in the cytoplasm. It catalyses the reaction dUMP + (6R)-5,10-methylene-5,6,7,8-tetrahydrofolate = 7,8-dihydrofolate + dTMP. Its pathway is pyrimidine metabolism; dTTP biosynthesis. Functionally, catalyzes the reductive methylation of 2'-deoxyuridine-5'-monophosphate (dUMP) to 2'-deoxythymidine-5'-monophosphate (dTMP) while utilizing 5,10-methylenetetrahydrofolate (mTHF) as the methyl donor and reductant in the reaction, yielding dihydrofolate (DHF) as a by-product. This enzymatic reaction provides an intracellular de novo source of dTMP, an essential precursor for DNA biosynthesis. This Buchnera aphidicola subsp. Acyrthosiphon pisum (strain Tuc7) protein is Thymidylate synthase.